Reading from the N-terminus, the 259-residue chain is Flap endonuclease Xni (259 aa).

Residue Asp109 coordinates Mg(2+). The region spanning 165–255 (LKPEQLADYW…FNLQDIRYEK (91 aa)) is the 5'-3' exonuclease domain. The K(+) site is built by Leu176, Ala177, Ile187, and Val190. Residues 189-194 (GVGPKA) form an interaction with DNA region.

Belongs to the Xni family. Mg(2+) serves as cofactor. It depends on K(+) as a cofactor.

Has flap endonuclease activity. During DNA replication, flap endonucleases cleave the 5'-overhanging flap structure that is generated by displacement synthesis when DNA polymerase encounters the 5'-end of a downstream Okazaki fragment. In Aliivibrio fischeri (strain ATCC 700601 / ES114) (Vibrio fischeri), this protein is Flap endonuclease Xni.